Reading from the N-terminus, the 235-residue chain is Ribitol-5-phosphate cytidylyltransferase (235 aa).

Residues 7 to 10 (LAGG), 82 to 88 (GADRNTS), and serine 113 each bind CTP.

It belongs to the IspD/TarI cytidylyltransferase family. TarI subfamily.

It catalyses the reaction D-ribitol 5-phosphate + CTP + H(+) = CDP-L-ribitol + diphosphate. The protein operates within cell wall biogenesis; poly(ribitol phosphate) teichoic acid biosynthesis. In terms of biological role, catalyzes the transfer of the cytidylyl group of CTP to D-ribitol 5-phosphate. This chain is Ribitol-5-phosphate cytidylyltransferase, found in Streptococcus pneumoniae (strain Hungary19A-6).